A 221-amino-acid polypeptide reads, in one-letter code: Oxaloacetate tautomerase FAHD1, mitochondrial (221 aa).

The N-terminal 24 residues, 1-24 (MASTKPLSRFWEWGKNIVCVGRNY), are a transit peptide targeting the mitochondrion. At Ser37 the chain carries Phosphoserine. Residues Glu68, Glu70, and Asp99 each contribute to the Mg(2+) site. Position 110 is an N6-acetyllysine (Lys110). Residue Lys112 is modified to N6-succinyllysine.

Belongs to the FAH family. Homodimer. Mg(2+) serves as cofactor. Mn(2+) is required as a cofactor.

It localises to the mitochondrion. The protein localises to the cytoplasm. It is found in the cytosol. It catalyses the reaction oxaloacetate = enol-oxaloacetate. It carries out the reaction oxaloacetate + H(+) = pyruvate + CO2. The enzyme catalyses a 3-acylpyruvate + H2O = a carboxylate + pyruvate + H(+). The catalysed reaction is acetylpyruvate + H2O = acetate + pyruvate + H(+). It catalyses the reaction 3-fumarylpyruvate + H2O = fumarate + pyruvate + H(+). Its activity is regulated as follows. Oxaloacetate decarboxylation is competitively inhibited by oxalate. In terms of biological role, tautomerase that converts enol-oxaloacetate, a strong inhibitor of succinate dehydrogenase, to the physiological keto form of oxaloacetate. It is thereby required to maximize aerobic respiration efficiency by preventing succinate dehydrogenase inhibition. Also acts as a weak oxaloacetate decarboxylase (ODx), catalyzing the decarboxylation of oxaloacetate (OAA) to pyruvate and CO(2), and as such is likely a regulatory enzyme in the TCA cycle. Also displays acylpyruvase activity, being able to hydrolyze acetylpyruvate and fumarylpyruvate in vitro. The protein is Oxaloacetate tautomerase FAHD1, mitochondrial of Rattus norvegicus (Rat).